Reading from the N-terminus, the 335-residue chain is 3-hydroxyisobutyrate dehydrogenase, mitochondrial (335 aa).

The transit peptide at 1-35 (MAASLGFRGAASGLRYWSGRRRPVGSLAAVCSRSM) directs the protein to the mitochondrion. 39–68 (TPVGFIGLGNMGNPMAKNLIKHGYPLILYD) contributes to the NAD(+) binding site. An N6-acetyllysine; alternate mark is found at lysine 59 and lysine 75. An N6-succinyllysine; alternate mark is found at lysine 59 and lysine 75. The residue at position 94 (lysine 94) is an N6-succinyllysine. NAD(+) is bound by residues 102–103 (LP) and asparagine 107. Lysine 120 carries the N6-acetyllysine modification. An NAD(+)-binding site is contributed by threonine 133. Lysine 140 carries the N6-succinyllysine modification. Lysine 144 bears the N6-acetyllysine mark. N6-acetyllysine; alternate is present on lysine 148. Lysine 148 bears the N6-succinyllysine; alternate mark. Lysine 208 is a catalytic residue. N6-acetyllysine; alternate occurs at positions 237 and 241. Lysine 237 and lysine 241 each carry N6-succinyllysine; alternate. Lysine 283 serves as a coordination point for NAD(+). Residue lysine 296 is modified to N6-succinyllysine. Position 320 is an N6-acetyllysine; alternate (lysine 320). At lysine 320 the chain carries N6-succinyllysine; alternate.

The protein belongs to the HIBADH-related family. 3-hydroxyisobutyrate dehydrogenase subfamily. In terms of assembly, homodimer. As to expression, higher level in kidney, liver, and heart than in muscle.

The protein localises to the mitochondrion. It carries out the reaction 3-hydroxy-2-methylpropanoate + NAD(+) = 2-methyl-3-oxopropanoate + NADH + H(+). The protein operates within amino-acid degradation; L-valine degradation. The sequence is that of 3-hydroxyisobutyrate dehydrogenase, mitochondrial (Hibadh) from Rattus norvegicus (Rat).